The sequence spans 347 residues: Leucine-rich repeat-containing protein 69 (347 aa).

LRR repeat units lie at residues 15–37 (NTKILTLNGKRITKMPSTLEKLP), 38–60 (NLKTLDLQNNSISKVCPELRTLT), 61–82 (QLTLLNLGNNHLQEVPEEIKYL), 84–105 (SLKNLHLFGNRICRIAPGVFNG), 108–129 (RLIMLNLNDNRLTSLPQEIGRL), 131–152 (SLTYLSLNRNNLTVIPKELCSL), 154–175 (HLSELHLNYNQIVYIPEEIKFL), 177–198 (NLQQLFLVRNNIEELPEEICHL), and 200–222 (KLRVLDIAGNVIQIFPAGFQNLR).

The protein belongs to the LRRC69 family.

This chain is Leucine-rich repeat-containing protein 69 (Lrrc69), found in Mus musculus (Mouse).